Here is an 85-residue protein sequence, read N- to C-terminus: Double gene block protein 2 (85 aa).

At 1–2 the chain is on the lumenal side; that stretch reads MK. A helical membrane pass occupies residues 3-23; sequence VLLVTGVLGLLLLIKWKSQST. At 24–36 the chain is on the cytoplasmic side; it reads STSNQTCQCPTSP. A helical membrane pass occupies residues 37–56; it reads WVIYAFYNSLSLVLLLCHLI. At 57-85 the chain is on the lumenal side; sequence PEIKPIHTSYNTHDSSKQQHISINTGNGK.

The protein belongs to the carmovirus double gene block protein 2 family.

It localises to the host endoplasmic reticulum membrane. Functionally, cell-to-cell movement function. This chain is Double gene block protein 2, found in Turnip crinkle virus (TCV).